The sequence spans 381 residues: Cytochrome b (381 aa).

A run of 4 helical transmembrane segments spans residues 34–54 (FGSL…FLAM), 78–99 (WLIR…YIHI), 114–134 (WNIG…GYVL), and 179–199 (FFAF…IHVL). Residues His84 and His98 each coordinate heme b. Residues His183 and His197 each contribute to the heme b site. Residue His202 participates in a ubiquinone binding. 4 helical membrane passes run 227–247 (YKDA…ALFL), 289–309 (LGGV…PLLH), 321–341 (LTQV…WIGG), and 348–368 (FILI…IAMP).

Belongs to the cytochrome b family. The cytochrome bc1 complex contains 3 respiratory subunits (MT-CYB, CYC1 and UQCRFS1), 2 core proteins (UQCRC1 and UQCRC2) and probably 6 low-molecular weight proteins. Heme b is required as a cofactor.

It is found in the mitochondrion inner membrane. Component of the ubiquinol-cytochrome c reductase complex (complex III or cytochrome b-c1 complex) that is part of the mitochondrial respiratory chain. The b-c1 complex mediates electron transfer from ubiquinol to cytochrome c. Contributes to the generation of a proton gradient across the mitochondrial membrane that is then used for ATP synthesis. The sequence is that of Cytochrome b (mt-cyb) from Isurus paucus (Longfin mako shark).